The sequence spans 245 residues: Ribonuclease PH (245 aa).

Phosphate is bound by residues Arg-86 and 124–126; that span reads GTR.

This sequence belongs to the RNase PH family. In terms of assembly, homohexameric ring arranged as a trimer of dimers.

It carries out the reaction tRNA(n+1) + phosphate = tRNA(n) + a ribonucleoside 5'-diphosphate. Phosphorolytic 3'-5' exoribonuclease that plays an important role in tRNA 3'-end maturation. Removes nucleotide residues following the 3'-CCA terminus of tRNAs; can also add nucleotides to the ends of RNA molecules by using nucleoside diphosphates as substrates, but this may not be physiologically important. Probably plays a role in initiation of 16S rRNA degradation (leading to ribosome degradation) during starvation. This chain is Ribonuclease PH, found in Bacillus mycoides (strain KBAB4) (Bacillus weihenstephanensis).